A 110-amino-acid chain; its full sequence is MSVKLKYDKIDQRNGDDSGGNHNNCGNGNNVTIVIKIQPQQQQQLINERQQQHQQQQQLINERQLLQQQIQLIKQQPQQQQPMNHTTPPSPHHLRFESPNDVPYIVIKAV.

Residues 1 to 16 (MSVKLKYDKIDQRNGD) show a composition bias toward basic and acidic residues. Disordered regions lie at residues 1–29 (MSVK…GNGN) and 73–100 (IKQQ…ESPN). Over residues 20-29 (GNHNNCGNGN) the composition is skewed to low complexity.

This is an uncharacterized protein from Dictyostelium discoideum (Social amoeba).